The primary structure comprises 447 residues: Tubulin beta-2 chain (447 aa).

Residues Gln-11, Glu-69, Ser-138, Gly-142, Thr-143, Gly-144, Asn-204, and Asn-226 each coordinate GTP. Glu-69 is a Mg(2+) binding site. The tract at residues 427–447 (DASISEGEEEYEEEQQLENEE) is disordered. The span at 432-447 (EGEEEYEEEQQLENEE) shows a compositional bias: acidic residues.

This sequence belongs to the tubulin family. As to quaternary structure, dimer of alpha and beta chains. A typical microtubule is a hollow water-filled tube with an outer diameter of 25 nm and an inner diameter of 15 nM. Alpha-beta heterodimers associate head-to-tail to form protofilaments running lengthwise along the microtubule wall with the beta-tubulin subunit facing the microtubule plus end conferring a structural polarity. Microtubules usually have 13 protofilaments but different protofilament numbers can be found in some organisms and specialized cells. Requires Mg(2+) as cofactor.

The protein localises to the cytoplasm. The protein resides in the cytoskeleton. Functionally, tubulin is the major constituent of microtubules, a cylinder consisting of laterally associated linear protofilaments composed of alpha- and beta-tubulin heterodimers. Microtubules grow by the addition of GTP-tubulin dimers to the microtubule end, where a stabilizing cap forms. Below the cap, tubulin dimers are in GDP-bound state, owing to GTPase activity of alpha-tubulin. The protein is Tubulin beta-2 chain (TUB2) of Erysiphe pisi (Pea powdery mildew).